Consider the following 99-residue polypeptide: Aspartyl/glutamyl-tRNA(Asn/Gln) amidotransferase subunit C (99 aa).

The protein belongs to the GatC family. Heterotrimer of A, B and C subunits.

It carries out the reaction L-glutamyl-tRNA(Gln) + L-glutamine + ATP + H2O = L-glutaminyl-tRNA(Gln) + L-glutamate + ADP + phosphate + H(+). The catalysed reaction is L-aspartyl-tRNA(Asn) + L-glutamine + ATP + H2O = L-asparaginyl-tRNA(Asn) + L-glutamate + ADP + phosphate + 2 H(+). Functionally, allows the formation of correctly charged Asn-tRNA(Asn) or Gln-tRNA(Gln) through the transamidation of misacylated Asp-tRNA(Asn) or Glu-tRNA(Gln) in organisms which lack either or both of asparaginyl-tRNA or glutaminyl-tRNA synthetases. The reaction takes place in the presence of glutamine and ATP through an activated phospho-Asp-tRNA(Asn) or phospho-Glu-tRNA(Gln). The polypeptide is Aspartyl/glutamyl-tRNA(Asn/Gln) amidotransferase subunit C (Burkholderia ambifaria (strain MC40-6)).